We begin with the raw amino-acid sequence, 188 residues long: ATP-dependent Clp protease proteolytic subunit 1 (188 aa).

S90 (nucleophile) is an active-site residue. H115 is an active-site residue.

The protein belongs to the peptidase S14 family. In terms of assembly, fourteen ClpP subunits assemble into 2 heptameric rings which stack back to back to give a disk-like structure with a central cavity, resembling the structure of eukaryotic proteasomes.

It localises to the cytoplasm. The catalysed reaction is Hydrolysis of proteins to small peptides in the presence of ATP and magnesium. alpha-casein is the usual test substrate. In the absence of ATP, only oligopeptides shorter than five residues are hydrolyzed (such as succinyl-Leu-Tyr-|-NHMec, and Leu-Tyr-Leu-|-Tyr-Trp, in which cleavage of the -Tyr-|-Leu- and -Tyr-|-Trp bonds also occurs).. In terms of biological role, cleaves peptides in various proteins in a process that requires ATP hydrolysis. Has a chymotrypsin-like activity. Plays a major role in the degradation of misfolded proteins. This is ATP-dependent Clp protease proteolytic subunit 1 from Corynebacterium jeikeium (strain K411).